Here is a 300-residue protein sequence, read N- to C-terminus: Urease accessory protein UreD (300 aa).

This sequence belongs to the UreD family. In terms of assembly, ureD, UreF and UreG form a complex that acts as a GTP-hydrolysis-dependent molecular chaperone, activating the urease apoprotein by helping to assemble the nickel containing metallocenter of UreC. The UreE protein probably delivers the nickel.

It is found in the cytoplasm. In terms of biological role, required for maturation of urease via the functional incorporation of the urease nickel metallocenter. The polypeptide is Urease accessory protein UreD (Prochlorococcus marinus (strain MIT 9312)).